The following is a 333-amino-acid chain: Transcription termination factor MTERF6, chloroplastic/mitochondrial (333 aa).

The protein belongs to the mTERF family.

The protein localises to the plastid. It is found in the chloroplast. The protein resides in the mitochondrion. Functionally, transcription termination factor essential for chloroplast development. Required for maturation of 16S rRNA, 18S rRNA and 23S rRNA in the chloroplast. Binds to a specific region within the tRNA(Ile)(GAU) gene at a position adjacent to and downstream of the 16S rRNA gene. Required for the maturation of tRNA(Ile)(GAU). Binds to double-stranded DNA. This is Transcription termination factor MTERF6, chloroplastic/mitochondrial from Arabidopsis thaliana (Mouse-ear cress).